The sequence spans 75 residues: Small ribosomal subunit protein bS18 (75 aa).

Belongs to the bacterial ribosomal protein bS18 family. As to quaternary structure, part of the 30S ribosomal subunit. Forms a tight heterodimer with protein bS6.

Functionally, binds as a heterodimer with protein bS6 to the central domain of the 16S rRNA, where it helps stabilize the platform of the 30S subunit. The sequence is that of Small ribosomal subunit protein bS18 from Colwellia psychrerythraea (strain 34H / ATCC BAA-681) (Vibrio psychroerythus).